Here is a 130-residue protein sequence, read N- to C-terminus: Succinate dehydrogenase assembly factor 3, mitochondrial (130 aa).

Residues 1-8 (MRPSLLRL) constitute a mitochondrion transit peptide.

The protein belongs to the complex I LYR family. SDHAF3 subfamily. Interacts with the iron-sulfur protein subunit within the SDH catalytic dimer.

It is found in the mitochondrion matrix. Plays an essential role in the assembly of succinate dehydrogenase (SDH), an enzyme complex (also referred to as respiratory complex II) that is a component of both the tricarboxylic acid (TCA) cycle and the mitochondrial electron transport chain, and which couples the oxidation of succinate to fumarate with the reduction of ubiquinone (coenzyme Q) to ubiquinol. Promotes maturation of the iron-sulfur protein subunit of the SDH catalytic dimer, protecting it from the deleterious effects of oxidants. May act together with SDHAF1. The polypeptide is Succinate dehydrogenase assembly factor 3, mitochondrial (Gibberella zeae (strain ATCC MYA-4620 / CBS 123657 / FGSC 9075 / NRRL 31084 / PH-1) (Wheat head blight fungus)).